The primary structure comprises 842 residues: Elongation factor 2 (842 aa).

In terms of domain architecture, tr-type G spans 17-253 (TNVRNMSVIA…LWGDSYFNPK (237 aa)). GTP-binding positions include 26 to 33 (AHVDHGKS), 158 to 161 (NKVD), and 213 to 215 (SGL). His-699 is subject to Diphthamide.

The protein belongs to the TRAFAC class translation factor GTPase superfamily. Classic translation factor GTPase family. EF-G/EF-2 subfamily.

The protein localises to the cytoplasm. The catalysed reaction is GTP + H2O = GDP + phosphate + H(+). In terms of biological role, catalyzes the GTP-dependent ribosomal translocation step during translation elongation. During this step, the ribosome changes from the pre-translocational (PRE) to the post-translocational (POST) state as the newly formed A-site-bound peptidyl-tRNA and P-site-bound deacylated tRNA move to the P and E sites, respectively. Catalyzes the coordinated movement of the two tRNA molecules, the mRNA and conformational changes in the ribosome. The protein is Elongation factor 2 (EFT1) of Naumovozyma castellii (Yeast).